A 183-amino-acid chain; its full sequence is Helofensin-1 (183 aa).

The N-terminal stretch at 1-26 (MQMDWLFIAVVSAIGLLSSGVPGTQG) is a signal peptide. One copy of the C(6)C(4)C(9)C(6)CC 1; approximate repeat lies at 27–64 (AYTTEQCRALNGTCRFYACFPKNVVIGKCDWLGWGCCA). A C(6)C(4)C(9)C(6)CC 2; approximate repeat occupies 65-101 (RTPLERCTAKKGTCTASGCTETDTDHGPCDGGAQCCQ). The C(6)C(4)C(9)C(6)CC 3; approximate repeat unit spans residues 102-139 (RDPVKYCKFHGNVCGRGKCPMDHIPIGEQCMPGYPCCK). A C(6)C(4)C(9)C(6)CC 4; approximate repeat occupies 140 to 177 (RDGPAYCKSKGGKCLRRCSQIVPTDIIGVCADGVPCCK).

The protein belongs to the beta-defensin family. Helofensin subfamily. As to expression, expressed by the mandibular venom gland.

The protein localises to the secreted. Lethal toxin which possesses an inhibitory effect on direct electrical stimulation of the isolated hemi-diaphragm of mice. Neither hemorrhagic nor hemolytic activities are detected. Phospholipase A2 activity, proteolytic activity and arginine esterolytic activity are absent. The sequence is that of Helofensin-1 from Heloderma suspectum cinctum (Banded Gila monster).